The sequence spans 116 residues: Nucleoid-associated protein PMT9312_0020 (116 aa).

Belongs to the YbaB/EbfC family. In terms of assembly, homodimer.

It localises to the cytoplasm. It is found in the nucleoid. Its function is as follows. Binds to DNA and alters its conformation. May be involved in regulation of gene expression, nucleoid organization and DNA protection. This chain is Nucleoid-associated protein PMT9312_0020, found in Prochlorococcus marinus (strain MIT 9312).